A 385-amino-acid chain; its full sequence is Probable thioesterase PNKD (385 aa).

The span at 31 to 42 (NKASQNRSRALQ) shows a compositional bias: polar residues. The tract at residues 31-57 (NKASQNRSRALQSHSSPECKEEPEPLS) is disordered. H172, H174, D176, H177, H229, D253, and H291 together coordinate Zn(2+).

It belongs to the metallo-beta-lactamase superfamily. Glyoxalase II family. Requires Zn(2+) as cofactor. In terms of processing, undergoes cleavage at the N-terminus.

It is found in the cell membrane. The protein localises to the mitochondrion. It catalyses the reaction a thioester + H2O = a thiol + a carboxylate + H(+). Probable thioesterase that may play a role in cellular detoxification processes; it likely acts on a yet-unknown alpha-hydroxythioester substrate. In vitro, it is able to catalyze the hydrolysis of S-D-lactoyl-glutathione to form glutathione and D-lactic acid at very low rate, though this reaction is not physiologically relevant in vivo. The protein is Probable thioesterase PNKD (PNKD) of Bos taurus (Bovine).